Consider the following 415-residue polypeptide: Mitochondrial distribution and morphology protein 12 (415 aa).

An SMP-LTD domain is found at 1–402 (MSFDINWSEL…WPSWVCFDLN (402 aa)). A disordered region spans residues 53–146 (EITIRHIGDP…PPLTDLRRSR (94 aa)). Acidic residues-rich tracts occupy residues 62–75 (PFDD…DDDE) and 92–103 (NSSDDDEDDEYD).

This sequence belongs to the MDM12 family. Component of the ER-mitochondria encounter structure (ERMES) or MDM complex, composed of MMM1, MDM10, MDM12 and MDM34. An MMM1 homodimer associates with one molecule of MDM12 on each side in a pairwise head-to-tail manner, and the SMP-LTD domains of MMM1 and MDM12 generate a continuous hydrophobic tunnel for phospholipid trafficking.

It is found in the mitochondrion outer membrane. Its subcellular location is the endoplasmic reticulum membrane. Component of the ERMES/MDM complex, which serves as a molecular tether to connect the endoplasmic reticulum (ER) and mitochondria. Components of this complex are involved in the control of mitochondrial shape and protein biogenesis, and function in nonvesicular lipid trafficking between the ER and mitochondria. MDM12 is required for the interaction of the ER-resident membrane protein MMM1 and the outer mitochondrial membrane-resident beta-barrel protein MDM10. The MDM12-MMM1 subcomplex functions in the major beta-barrel assembly pathway that is responsible for biogenesis of all mitochondrial outer membrane beta-barrel proteins, and acts in a late step after the SAM complex. The MDM10-MDM12-MMM1 subcomplex further acts in the TOM40-specific pathway after the action of the MDM12-MMM1 complex. Essential for establishing and maintaining the structure of mitochondria and maintenance of mtDNA nucleoids. The protein is Mitochondrial distribution and morphology protein 12 of Debaryomyces hansenii (strain ATCC 36239 / CBS 767 / BCRC 21394 / JCM 1990 / NBRC 0083 / IGC 2968) (Yeast).